The following is a 346-amino-acid chain: Annexin A1 (346 aa).

The residue at position 2 (Ala-2) is an N-acetylalanine. Position 5 is a phosphoserine; by TRPM7 (Ser-5). Gln-19 participates in a covalent cross-link: Isoglutamyl lysine isopeptide (Gln-Lys) (interchain with K-?). The residue at position 21 (Tyr-21) is a Phosphotyrosine; by EGFR. Residues Val-25–Asp-47 form a disordered region. Residues Ser-34 and Ser-37 each carry the phosphoserine modification. At Thr-41 the chain carries Phosphothreonine. Annexin repeat units lie at residues Phe-42 to Lys-113, Thr-114 to Lys-185, Asp-197 to Lys-269, and Ser-273 to Gly-344. Lys-58 carries the N6-acetyllysine modification. Residues Gly-59, Val-60, Glu-62, Lys-97, Leu-100, Glu-105, Met-127, Gly-129, Gly-131, Thr-132, and Glu-134 each coordinate Ca(2+). At Thr-136 the chain carries Phosphothreonine. Asp-171, Gly-210, and Arg-213 together coordinate Ca(2+). A Glycyl lysine isopeptide (Lys-Gly) (interchain with G-Cter in SUMO1); alternate cross-link involves residue Lys-214. Lys-214 participates in a covalent cross-link: Glycyl lysine isopeptide (Lys-Gly) (interchain with G-Cter in SUMO2); alternate. Gly-215 lines the Ca(2+) pocket. Lys-239 is modified (N6-acetyllysine). Residues Asp-253, Glu-255, and Leu-256 each contribute to the Ca(2+) site. Lys-257 is covalently cross-linked (Glycyl lysine isopeptide (Lys-Gly) (interchain with G-Cter in SUMO1)). Residues Glu-261, Met-286, Gly-288, and Gly-290 each coordinate Ca(2+). At Lys-312 the chain carries N6-acetyllysine. Cys-324 and Cys-343 are oxidised to a cystine. Ca(2+) is bound by residues Leu-328, Glu-330, and Thr-331. Lys-332 participates in a covalent cross-link: Glycyl lysine isopeptide (Lys-Gly) (interchain with G-Cter in SUMO1). Glu-336 provides a ligand contact to Ca(2+).

It belongs to the annexin family. As to quaternary structure, homodimer; non-covalently linked. Homodimer; linked by transglutamylation. Homodimers linked by transglutamylation are observed in placenta, but not in other tissues. Interacts with S100A11. Heterotetramer, formed by two molecules each of S100A11 and ANXA1. Interacts with DYSF. Interacts with EGFR. Post-translationally, phosphorylated by EGFR. Phosphorylated by protein kinase C and TRPM7. Phosphorylated in response to EGF treatment. In terms of processing, sumoylated. Proteolytically cleaved by cathepsin CTSG to release the active N-terminal peptide Ac2-26. In terms of tissue distribution, detected in lung and spleen (at protein level).

Its subcellular location is the nucleus. It localises to the cytoplasm. The protein resides in the cell projection. It is found in the cilium. The protein localises to the basolateral cell membrane. Its subcellular location is the lateral cell membrane. It localises to the early endosome. The protein resides in the cell membrane. It is found in the cytoplasmic vesicle membrane. The protein localises to the apical cell membrane. Its subcellular location is the membrane. It localises to the endosome. The protein resides in the secreted. It is found in the extracellular space. The protein localises to the extracellular exosome. Its subcellular location is the cytoplasmic vesicle. It localises to the secretory vesicle lumen. The protein resides in the phagocytic cup. In terms of biological role, plays important roles in the innate immune response as effector of glucocorticoid-mediated responses and regulator of the inflammatory process. Has anti-inflammatory activity. Plays a role in glucocorticoid-mediated down-regulation of the early phase of the inflammatory response. Contributes to the adaptive immune response by enhancing signaling cascades that are triggered by T-cell activation, regulates differentiation and proliferation of activated T-cells. Promotes the differentiation of T-cells into Th1 cells and negatively regulates differentiation into Th2 cells. Has no effect on unstimulated T-cells. Negatively regulates hormone exocytosis via activation of the formyl peptide receptors and reorganization of the actin cytoskeleton. Has high affinity for Ca(2+) and can bind up to eight Ca(2+) ions. Displays Ca(2+)-dependent binding to phospholipid membranes. Plays a role in the formation of phagocytic cups and phagosomes. Plays a role in phagocytosis by mediating the Ca(2+)-dependent interaction between phagosomes and the actin cytoskeleton. Functionally, functions at least in part by activating the formyl peptide receptors and downstream signaling cascades. Promotes chemotaxis of granulocytes and monocytes via activation of the formyl peptide receptors. Promotes rearrangement of the actin cytoskeleton, cell polarization and cell migration. Promotes resolution of inflammation and wound healing. Acts via neutrophil N-formyl peptide receptors to enhance the release of CXCL2. This Sus scrofa (Pig) protein is Annexin A1 (ANXA1).